A 420-amino-acid chain; its full sequence is Gamma-glutamyl phosphate reductase (420 aa).

It belongs to the gamma-glutamyl phosphate reductase family.

Its subcellular location is the cytoplasm. It carries out the reaction L-glutamate 5-semialdehyde + phosphate + NADP(+) = L-glutamyl 5-phosphate + NADPH + H(+). The protein operates within amino-acid biosynthesis; L-proline biosynthesis; L-glutamate 5-semialdehyde from L-glutamate: step 2/2. In terms of biological role, catalyzes the NADPH-dependent reduction of L-glutamate 5-phosphate into L-glutamate 5-semialdehyde and phosphate. The product spontaneously undergoes cyclization to form 1-pyrroline-5-carboxylate. In Cereibacter sphaeroides (strain ATCC 17023 / DSM 158 / JCM 6121 / CCUG 31486 / LMG 2827 / NBRC 12203 / NCIMB 8253 / ATH 2.4.1.) (Rhodobacter sphaeroides), this protein is Gamma-glutamyl phosphate reductase.